The chain runs to 275 residues: Translation initiation factor 2 subunit alpha (275 aa).

The S1 motif domain occupies 12-83 (GELVVATVKR…KKGHIDLSLR (72 aa)).

Belongs to the eIF-2-alpha family. Heterotrimer composed of an alpha, a beta and a gamma chain.

Functionally, eIF-2 functions in the early steps of protein synthesis by forming a ternary complex with GTP and initiator tRNA. The protein is Translation initiation factor 2 subunit alpha of Pyrococcus furiosus (strain ATCC 43587 / DSM 3638 / JCM 8422 / Vc1).